The primary structure comprises 313 residues: MAAPAAGAEPSSDPLVVPRGRLARATDRARSYIALMKLRVVELLLVSTVPVMLLAERGMPSWWLIAVTLLAGTLSAGSANTINCYVDRDIDQLMGRTKRRPLVREVVEPAQALRFGIALGIISTLMFGLLVNWTSAVLSVGAIAFYVFVYTLGLKRRSPSNIVIGGAAGCFPVLIGWSAVTGTVGWPAVLLFAVVFFWTPPHFWALAIRFKDDYAAAGVPMLPVVATLEVVTRRILAYSYLMVAVSLAVAPVADIGLVYLVPAVLLGAWFVAEAHRMAARAKRGEEIKPMRLFHMSITYLTLLFAALAAAALL.

A run of 9 helical transmembrane segments spans residues 33–53 (IALM…PVML), 59–79 (MPSW…AGSA), 107–127 (VEPA…TLMF), 129–149 (LLVN…YVFV), 162–182 (IVIG…AVTG), 188–208 (AVLL…ALAI), 212–232 (DDYA…EVVT), 252–272 (VADI…WFVA), and 292–312 (LFHM…AAAL).

It belongs to the UbiA prenyltransferase family. Protoheme IX farnesyltransferase subfamily.

It is found in the cell membrane. The catalysed reaction is heme b + (2E,6E)-farnesyl diphosphate + H2O = Fe(II)-heme o + diphosphate. It functions in the pathway porphyrin-containing compound metabolism; heme O biosynthesis; heme O from protoheme: step 1/1. Functionally, converts heme B (protoheme IX) to heme O by substitution of the vinyl group on carbon 2 of heme B porphyrin ring with a hydroxyethyl farnesyl side group. The sequence is that of Protoheme IX farnesyltransferase from Parafrankia sp. (strain EAN1pec).